Consider the following 256-residue polypeptide: MYYGFDMGGTKIELGVFDENLQRIWHKRVPTPREDYPQLLQILRDLTEEADTYCGVQGSVGIGIPGLPNADDGTVFTANVPSAMGQPLQADLSRLIQREVRIDNDANCFALSEAWDPEFRTYPTVLGLILGTGVGGGLIVNGSIVSGRNHITGEFGHFRLPVDALDILGADIPRVPCGCGHRGCIENYISGRGFEWMYSHFYQHTLPATDIIAHYAAGEPKAVAHVERFMDVLAVCLGNLLTMLGSPFGRGGWGVV.

Residues 4-11 (GFDMGGTK) and 133-140 (GVGGGLIV) contribute to the ATP site. Residues His157, Cys177, Cys179, and Cys184 each coordinate Zn(2+).

It belongs to the ROK (NagC/XylR) family. NagK subfamily.

It carries out the reaction N-acetyl-D-glucosamine + ATP = N-acetyl-D-glucosamine 6-phosphate + ADP + H(+). The protein operates within cell wall biogenesis; peptidoglycan recycling. In terms of biological role, catalyzes the phosphorylation of N-acetyl-D-glucosamine (GlcNAc) derived from cell-wall degradation, yielding GlcNAc-6-P. In Yersinia pestis bv. Antiqua (strain Nepal516), this protein is N-acetyl-D-glucosamine kinase (nagK).